We begin with the raw amino-acid sequence, 253 residues long: 5'/3'-nucleotidase SurE (253 aa).

Residues Asp-8, Asp-9, Ser-39, and Asn-92 each coordinate a divalent metal cation.

Belongs to the SurE nucleotidase family. A divalent metal cation serves as cofactor.

It is found in the cytoplasm. The enzyme catalyses a ribonucleoside 5'-phosphate + H2O = a ribonucleoside + phosphate. The catalysed reaction is a ribonucleoside 3'-phosphate + H2O = a ribonucleoside + phosphate. It catalyses the reaction [phosphate](n) + H2O = [phosphate](n-1) + phosphate + H(+). Nucleotidase with a broad substrate specificity as it can dephosphorylate various ribo- and deoxyribonucleoside 5'-monophosphates and ribonucleoside 3'-monophosphates with highest affinity to 3'-AMP. Also hydrolyzes polyphosphate (exopolyphosphatase activity) with the preference for short-chain-length substrates (P20-25). Might be involved in the regulation of dNTP and NTP pools, and in the turnover of 3'-mononucleotides produced by numerous intracellular RNases (T1, T2, and F) during the degradation of various RNAs. The sequence is that of 5'/3'-nucleotidase SurE from Escherichia coli O17:K52:H18 (strain UMN026 / ExPEC).